Consider the following 120-residue polypeptide: uncharacterized protein (120 aa).

The chain crosses the membrane as a helical span at residues 63 to 83; it reads IDMSCVICFNFSCHLFVVIFI.

The protein resides in the membrane. This is an uncharacterized protein from Saccharomyces cerevisiae (strain ATCC 204508 / S288c) (Baker's yeast).